We begin with the raw amino-acid sequence, 626 residues long: Chaperone protein HtpG (626 aa).

Positions 1–343 (MHKQTLSFQA…SADLPLNVSR (343 aa)) are a; substrate-binding. A b region spans residues 344–558 (ELLQESRAVK…DGDMSTQLAR (215 aa)). Residues 559 to 626 (MLKQAGQAVP…YVKRVNALLV (68 aa)) are c.

The protein belongs to the heat shock protein 90 family. In terms of assembly, homodimer.

The protein resides in the cytoplasm. In terms of biological role, molecular chaperone. Has ATPase activity. The polypeptide is Chaperone protein HtpG (Polaromonas sp. (strain JS666 / ATCC BAA-500)).